The following is a 310-amino-acid chain: Ribosomal RNA small subunit methyltransferase H (310 aa).

S-adenosyl-L-methionine-binding positions include 33 to 35 (AGH), aspartate 53, phenylalanine 79, aspartate 100, and glutamine 107.

This sequence belongs to the methyltransferase superfamily. RsmH family.

The protein resides in the cytoplasm. The enzyme catalyses cytidine(1402) in 16S rRNA + S-adenosyl-L-methionine = N(4)-methylcytidine(1402) in 16S rRNA + S-adenosyl-L-homocysteine + H(+). Functionally, specifically methylates the N4 position of cytidine in position 1402 (C1402) of 16S rRNA. The chain is Ribosomal RNA small subunit methyltransferase H from Clostridium beijerinckii (strain ATCC 51743 / NCIMB 8052) (Clostridium acetobutylicum).